Here is a 166-residue protein sequence, read N- to C-terminus: Endoribonuclease YbeY (166 aa).

The Zn(2+) site is built by His-132, His-136, and His-142.

It belongs to the endoribonuclease YbeY family. Zn(2+) is required as a cofactor.

Its subcellular location is the cytoplasm. In terms of biological role, single strand-specific metallo-endoribonuclease involved in late-stage 70S ribosome quality control and in maturation of the 3' terminus of the 16S rRNA. The sequence is that of Endoribonuclease YbeY from Clostridium botulinum (strain Alaska E43 / Type E3).